The following is a 235-amino-acid chain: CMP-N,N'-diacetyllegionaminic acid synthase (235 aa).

The protein belongs to the CMP-NeuNAc synthase family.

It catalyses the reaction N,N-diacetyllegionaminate + CTP = CMP-N,N-diacetyllegionaminate + diphosphate. Involved in biosynthesis of legionaminic acid (5,7-diamino-3,5,7,9-tetradeoxy-D-glycero-D-galacto-non-2-ulosonic acid)(Leg), a sialic acid-like derivative that is incorporated into flagellin via O-linkage to Ser/Thr. Catalyzes the conversion of N,N'-diacetyllegionaminic acid (Leg5Ac7Ac) and CTP into CMP-N,N'-diacetyllegionaminic acid (CMP-Leg5Ac7Ac). In Campylobacter jejuni subsp. jejuni serotype O:2 (strain ATCC 700819 / NCTC 11168), this protein is CMP-N,N'-diacetyllegionaminic acid synthase (legF).